The sequence spans 201 residues: Orotidine 5'-phosphate decarboxylase (201 aa).

Substrate-binding positions include Asp8, Lys26, 52–61 (DLKFCDIPST), Thr106, Arg153, Gln161, Gly180, and Arg181. Lys54 functions as the Proton donor in the catalytic mechanism.

The protein belongs to the OMP decarboxylase family. Type 1 subfamily. As to quaternary structure, homodimer.

It carries out the reaction orotidine 5'-phosphate + H(+) = UMP + CO2. Its pathway is pyrimidine metabolism; UMP biosynthesis via de novo pathway; UMP from orotate: step 2/2. Its function is as follows. Catalyzes the decarboxylation of orotidine 5'-monophosphate (OMP) to uridine 5'-monophosphate (UMP). This chain is Orotidine 5'-phosphate decarboxylase (pyrF), found in Thermotoga maritima (strain ATCC 43589 / DSM 3109 / JCM 10099 / NBRC 100826 / MSB8).